Here is a 498-residue protein sequence, read N- to C-terminus: Fascin-3 (498 aa).

It belongs to the fascin family. As to expression, expressed in testis.

The protein resides in the cytoplasm. The protein localises to the cytoskeleton. Acts as an actin bundling protein. This chain is Fascin-3 (Fscn3), found in Mus musculus (Mouse).